We begin with the raw amino-acid sequence, 300 residues long: 4-hydroxy-tetrahydrodipicolinate synthase (300 aa).

T45 provides a ligand contact to pyruvate. Y140 functions as the Proton donor/acceptor in the catalytic mechanism. K169 functions as the Schiff-base intermediate with substrate in the catalytic mechanism. I210 lines the pyruvate pocket.

This sequence belongs to the DapA family. Homotetramer; dimer of dimers.

The protein resides in the cytoplasm. The enzyme catalyses L-aspartate 4-semialdehyde + pyruvate = (2S,4S)-4-hydroxy-2,3,4,5-tetrahydrodipicolinate + H2O + H(+). It functions in the pathway amino-acid biosynthesis; L-lysine biosynthesis via DAP pathway; (S)-tetrahydrodipicolinate from L-aspartate: step 3/4. Functionally, catalyzes the condensation of (S)-aspartate-beta-semialdehyde [(S)-ASA] and pyruvate to 4-hydroxy-tetrahydrodipicolinate (HTPA). The protein is 4-hydroxy-tetrahydrodipicolinate synthase of Helicobacter pylori (strain P12).